The chain runs to 529 residues: Zinc finger protein 572 (529 aa).

Residues 1 to 125 are disordered; the sequence is MEQEQKLLVS…TGPAGQQNPS (125 aa). A Glycyl lysine isopeptide (Lys-Gly) (interchain with G-Cter in SUMO2) cross-link involves residue K6. Positions 22-42 are enriched in polar residues; it reads KNTITGDESKNNLKTVQFSNS. The span at 43–68 shows a compositional bias: basic and acidic residues; sequence KADKERASKWSRSDGPENYKDEDTKE. Residues 87–96 are compositionally biased toward polar residues; that stretch reads NDSNLGSQRN. C2H2-type zinc fingers lie at residues 131-153, 159-181, 187-209, 215-237, 243-265, 271-293, 299-321, 327-349, 383-405, 411-433, 439-461, and 467-489; these read YKCSECWKSFSNSSHLRIHQRTH, YRCSECGKCFSNSSHLIQHLRTH, YQCGECGKSFSNTSHLIIHERTH, YKCPECAKSLSSSSHLIQHHRSH, YECPLCGKCFSHSYVLVEHQRTH, YKCPDCGKSFSQSSSLIRHQRTH, YKCPECGKGFGCNSTLIKHQRIH, YQCIECGKNFSRSSNLVTHQKMH, YKCCECGKSFGLSSHLIRHQRTH, YRCSECWKTFSQSSTLVIHQRTH, YKCPDCGECFSQSFNLIRHRRTH, and YKCTDCEKCFSRSAYLSQHRKIH.

Belongs to the krueppel C2H2-type zinc-finger protein family.

The protein resides in the nucleus. In terms of biological role, may be involved in transcriptional regulation. This Bos taurus (Bovine) protein is Zinc finger protein 572 (ZNF572).